The primary structure comprises 116 residues: Protein Rev (116 aa).

2 positions are modified to phosphoserine; by host CK2: serine 5 and serine 8. Residues 18–26 form a homomultimerization region; sequence LIKFLYQSN. Positions 23 to 48 are disordered; the sequence is YQSNPPPKPEGTRQARRNRRRRWRER. Residues 34–50 carry the Nuclear localization signal and RNA-binding (RRE) motif; the sequence is TRQARRNRRRRWRERQR. Residues 36-47 are compositionally biased toward basic residues; sequence QARRNRRRRWRE. Positions 73–84 match the Nuclear export signal and binding to XPO1 motif; the sequence is LQLPPLERLTLD. Serine 92 and serine 99 each carry phosphoserine; by host. Positions 92–116 are disordered; it reads SGTQGVGSPQILVESPTVLESGTKE.

This sequence belongs to the HIV-1 REV protein family. As to quaternary structure, homomultimer; when bound to the RRE. Multimeric assembly is essential for activity and may involve XPO1. Binds to human KPNB1, XPO1, TNPO1, RANBP5 and IPO7. Interacts with the viral Integrase. Interacts with human KHDRBS1. Interacts with human NAP1; this interaction decreases Rev multimerization and stimulates its activity. Interacts with human DEAD-box helicases DDX3 and DDX24; these interactions may serve for viral RNA export to the cytoplasm and packaging, respectively. Interacts with human PSIP1; this interaction may inhibit HIV-1 DNA integration by promoting dissociation of the Integrase-LEDGF/p75 complex. Asymmetrically arginine dimethylated at one site by host PRMT6. Methylation impairs the RNA-binding activity and export of viral RNA from the nucleus to the cytoplasm. In terms of processing, phosphorylated by protein kinase CK2. Presence of, and maybe binding to the N-terminus of the regulatory beta subunit of CK2 is necessary for CK2-mediated Rev's phosphorylation.

The protein localises to the host nucleus. It is found in the host nucleolus. It localises to the host cytoplasm. Its function is as follows. Escorts unspliced or incompletely spliced viral pre-mRNAs (late transcripts) out of the nucleus of infected cells. These pre-mRNAs carry a recognition sequence called Rev responsive element (RRE) located in the env gene, that is not present in fully spliced viral mRNAs (early transcripts). This function is essential since most viral proteins are translated from unspliced or partially spliced pre-mRNAs which cannot exit the nucleus by the pathway used by fully processed cellular mRNAs. Rev itself is translated from a fully spliced mRNA that readily exits the nucleus. Rev's nuclear localization signal (NLS) binds directly to KPNB1/Importin beta-1 without previous binding to KPNA1/Importin alpha-1. KPNB1 binds to the GDP bound form of RAN (Ran-GDP) and targets Rev to the nucleus. In the nucleus, the conversion from Ran-GDP to Ran-GTP dissociates Rev from KPNB1 and allows Rev's binding to the RRE in viral pre-mRNAs. Rev multimerization on the RRE via cooperative assembly exposes its nuclear export signal (NES) to the surface. Rev can then form a complex with XPO1/CRM1 and Ran-GTP, leading to nuclear export of the complex. Conversion from Ran-GTP to Ran-GDP mediates dissociation of the Rev/RRE/XPO1/RAN complex, so that Rev can return to the nucleus for a subsequent round of export. Beside KPNB1, also seems to interact with TNPO1/Transportin-1, RANBP5/IPO5 and IPO7/RANBP7 for nuclear import. The nucleoporin-like HRB/RIP is an essential cofactor that probably indirectly interacts with Rev to release HIV RNAs from the perinuclear region to the cytoplasm. The polypeptide is Protein Rev (Human immunodeficiency virus type 1 group M subtype B (isolate SC) (HIV-1)).